The following is a 238-amino-acid chain: tRNA1(Val) (adenine(37)-N6)-methyltransferase (238 aa).

This sequence belongs to the methyltransferase superfamily. tRNA (adenine-N(6)-)-methyltransferase family.

The protein localises to the cytoplasm. The catalysed reaction is adenosine(37) in tRNA1(Val) + S-adenosyl-L-methionine = N(6)-methyladenosine(37) in tRNA1(Val) + S-adenosyl-L-homocysteine + H(+). In terms of biological role, specifically methylates the adenine in position 37 of tRNA(1)(Val) (anticodon cmo5UAC). The chain is tRNA1(Val) (adenine(37)-N6)-methyltransferase from Shewanella baltica (strain OS185).